The primary structure comprises 627 residues: Protein zyg-11 homolog A (627 aa).

LRR repeat units follow at residues 123–146 (LPNL…LSCK), 203–227 (LPNL…SFLQ), and 409–432 (ITSI…LIMA).

The protein belongs to the zyg-11 family.

In terms of biological role, probably acts as a target recruitment subunit in an E3 ubiquitin ligase complex ZYGA-CUL2-elongin BC. The protein is Protein zyg-11 homolog A (Zyg11a) of Mus musculus (Mouse).